The sequence spans 167 residues: Ribosome maturation factor RimM (167 aa).

One can recognise a PRC barrel domain in the interval 92–166 (DDEFYHTDLI…RIVADPPEGL (75 aa)).

This sequence belongs to the RimM family. As to quaternary structure, binds ribosomal protein uS19.

It localises to the cytoplasm. In terms of biological role, an accessory protein needed during the final step in the assembly of 30S ribosomal subunit, possibly for assembly of the head region. Essential for efficient processing of 16S rRNA. May be needed both before and after RbfA during the maturation of 16S rRNA. It has affinity for free ribosomal 30S subunits but not for 70S ribosomes. The sequence is that of Ribosome maturation factor RimM from Ruegeria pomeroyi (strain ATCC 700808 / DSM 15171 / DSS-3) (Silicibacter pomeroyi).